A 493-amino-acid chain; its full sequence is D-aminoacyl-tRNA deacylase (493 aa).

Positions 22 to 37 are enriched in basic and acidic residues; sequence DLGDWERRDDPSRPDA. 2 disordered regions span residues 22–44 and 441–493; these read DLGD…GTYY and PEGP…EPSE.

This sequence belongs to the DtdA deacylase family. As to quaternary structure, monomer. Zn(2+) is required as a cofactor.

The catalysed reaction is a D-aminoacyl-tRNA + H2O = a tRNA + a D-alpha-amino acid + H(+). It carries out the reaction glycyl-tRNA(Ala) + H2O = tRNA(Ala) + glycine + H(+). D-aminoacyl-tRNA deacylase with broad substrate specificity. By recycling D-aminoacyl-tRNA to D-amino acids and free tRNA molecules, this enzyme counteracts the toxicity associated with the formation of D-aminoacyl-tRNA entities in vivo. The protein is D-aminoacyl-tRNA deacylase of Halorubrum lacusprofundi (strain ATCC 49239 / DSM 5036 / JCM 8891 / ACAM 34).